The following is a 230-amino-acid chain: Small ribosomal subunit protein uS3 (230 aa).

The KH type-2 domain occupies 39-107 (VRKFLVEKLQ…PAQINIAEIR (69 aa)).

This sequence belongs to the universal ribosomal protein uS3 family. In terms of assembly, part of the 30S ribosomal subunit. Forms a tight complex with proteins S10 and S14.

Its function is as follows. Binds the lower part of the 30S subunit head. Binds mRNA in the 70S ribosome, positioning it for translation. The polypeptide is Small ribosomal subunit protein uS3 (Shewanella baltica (strain OS223)).